Consider the following 482-residue polypeptide: NADH-quinone oxidoreductase subunit N (482 aa).

Transmembrane regions (helical) follow at residues 11 to 31 (AVPEMFVLFMALVILLAGVFI), 37 to 57 (IPYYLTQITLILVAGLTWYIF), 77 to 97 (RFSVYLKLFIYLSVFFAFIYA), 106 to 126 (IPHTEFYVLGLLSMLGMVALV), 131 to 151 (LLTVFLGLELLSLPTYAMVAL), 166 to 186 (FVIGAIASGMLLYGMSMIFGA), 208 to 228 (LILVFGLVFIVAGVAFKLGTA), 255 to 275 (IAAYAMIIRLLILGMPALHVQ), 279 to 299 (MLIVVAILSMGIGNFAAIVQS), 304 to 324 (MLAYSSIAHMGYMLLGVLCGT), 332 to 352 (MFYTITYSLMSLGAFGMVVLM), 376 to 396 (AFMMMLILFSLAGVPPLVGFI), 404 to 424 (ALIQVHLVWLAVLAVLFAIVG), and 462 to 482 (LAVLFIGIFPGWLYALSHLAF).

It belongs to the complex I subunit 2 family. As to quaternary structure, NDH-1 is composed of 14 different subunits. Subunits NuoA, H, J, K, L, M, N constitute the membrane sector of the complex.

It localises to the cell inner membrane. The enzyme catalyses a quinone + NADH + 5 H(+)(in) = a quinol + NAD(+) + 4 H(+)(out). NDH-1 shuttles electrons from NADH, via FMN and iron-sulfur (Fe-S) centers, to quinones in the respiratory chain. The immediate electron acceptor for the enzyme in this species is believed to be ubiquinone. Couples the redox reaction to proton translocation (for every two electrons transferred, four hydrogen ions are translocated across the cytoplasmic membrane), and thus conserves the redox energy in a proton gradient. The chain is NADH-quinone oxidoreductase subunit N from Coxiella burnetii (strain RSA 493 / Nine Mile phase I).